Reading from the N-terminus, the 872-residue chain is Chaperone protein ClpB 2 (872 aa).

The region spanning 6 to 148 is the Clp R domain; it reads PNKFTEKAWE…AEIIKQIRGT (143 aa). 2 repeat regions span residues 9-73 and 85-148; these read FTEK…IAQQ and LGRS…IRGT. The segment at 161 to 342 is NBD1; the sequence is ESLEKYGRDL…RRFQEVLVDE (182 aa). An ATP-binding site is contributed by 208–215; it reads GEPGVGKT. Residues 343-551 are linker; that stretch reads PNVLDTISIL…IAEIISKWTG (209 aa). A coiled-coil region spans residues 393-527; the sequence is IDLVDEAAAK…LETQLAEQQT (135 aa). The tract at residues 561–772 is NBD2; it reads EKEKLLHLED…RVDETIIFHG (212 aa). 611–618 contacts ATP; the sequence is GPTGVGKT. Positions 773-872 are C-terminal; it reads LQKSELRSIV…TSLRGDLVIV (100 aa).

This sequence belongs to the ClpA/ClpB family. As to quaternary structure, homohexamer. The oligomerization is ATP-dependent.

It is found in the cytoplasm. Functionally, part of a stress-induced multi-chaperone system, it is involved in the recovery of the cell from heat-induced damage, in cooperation with DnaK, DnaJ and GrpE. Acts before DnaK, in the processing of protein aggregates. Protein binding stimulates the ATPase activity; ATP hydrolysis unfolds the denatured protein aggregates, which probably helps expose new hydrophobic binding sites on the surface of ClpB-bound aggregates, contributing to the solubilization and refolding of denatured protein aggregates by DnaK. This Synechocystis sp. (strain ATCC 27184 / PCC 6803 / Kazusa) protein is Chaperone protein ClpB 2 (clpB2).